The sequence spans 1760 residues: Chitin synthase A (1760 aa).

N-linked (GlcNAc...) asparagine glycosylation is present at asparagine 157. Transmembrane regions (helical) follow at residues 729–749 (IWTG…LRFV) and 765–785 (LVLV…IIAF). 2 N-linked (GlcNAc...) asparagine glycosylation sites follow: asparagine 876 and asparagine 996. A helical membrane pass occupies residues 1027–1047 (ILLAFTCLICAVILVKFLAAL). N-linked (GlcNAc...) asparagine glycosylation is present at asparagine 1392. 3 helical membrane-spanning segments follow: residues 1417–1437 (FVVL…VYLG), 1449–1469 (IPII…IIFI), and 1477–1497 (IGWM…LPMY). N-linked (GlcNAc...) asparagine glycans are attached at residues asparagine 1557, asparagine 1645, and asparagine 1650. Residues 1670–1691 (DNLLGVPRPNSRSPVGGYTSRP) are disordered. The 57-residue stretch at 1702–1758 (GPDEMAITDAIRSCLAEVDLDTVTKKQVRALVEQRLQATLTGDKRAFLDRQIDQELA) folds into the DEK-C domain.

Belongs to the chitin synthase family. Class V subfamily.

The protein localises to the cell membrane. The catalysed reaction is [(1-&gt;4)-N-acetyl-beta-D-glucosaminyl](n) + UDP-N-acetyl-alpha-D-glucosamine = [(1-&gt;4)-N-acetyl-beta-D-glucosaminyl](n+1) + UDP + H(+). In terms of biological role, polymerizes chitin, a structural polymer of the cell wall and septum, by transferring the sugar moiety of UDP-GlcNAc to the non-reducing end of the growing chitin polymer. Plays an important role in cell-wall formation during both hyphal growth and conidiation. The polypeptide is Chitin synthase A (Aspergillus oryzae (strain ATCC 42149 / RIB 40) (Yellow koji mold)).